The following is a 400-amino-acid chain: Chorismate synthase (400 aa).

Residues Arg40 and Arg46 each contribute to the NADP(+) site. Residues 135-137 (RAS), 257-258 (QA), Gly301, 316-320 (KPIST), and Arg342 each bind FMN.

This sequence belongs to the chorismate synthase family. As to quaternary structure, homotetramer. The cofactor is FMNH2.

It catalyses the reaction 5-O-(1-carboxyvinyl)-3-phosphoshikimate = chorismate + phosphate. Its pathway is metabolic intermediate biosynthesis; chorismate biosynthesis; chorismate from D-erythrose 4-phosphate and phosphoenolpyruvate: step 7/7. In terms of biological role, catalyzes the anti-1,4-elimination of the C-3 phosphate and the C-6 proR hydrogen from 5-enolpyruvylshikimate-3-phosphate (EPSP) to yield chorismate, which is the branch point compound that serves as the starting substrate for the three terminal pathways of aromatic amino acid biosynthesis. This reaction introduces a second double bond into the aromatic ring system. In Tropheryma whipplei (strain TW08/27) (Whipple's bacillus), this protein is Chorismate synthase.